A 262-amino-acid chain; its full sequence is Protein CUSTOS (262 aa).

Disordered regions lie at residues 1 to 79 (MAAP…LQTT) and 126 to 262 (FTSV…IPAN). Positions 9–18 (SDSESSNSSS) are enriched in low complexity. Positions 51–61 (ANSQLSTSQPS) are enriched in polar residues. At Ser61 the chain carries Phosphoserine. Thr79 is subject to Phosphothreonine. A Phosphoserine modification is found at Ser138. Phosphothreonine is present on Thr182. Positions 188-199 (KKKRKLKKKAKK) are enriched in basic residues. A compositionally biased stretch (low complexity) spans 200–209 (VASVDSAVAA). Residues 210-221 (TTPTSMATVQKQ) show a composition bias toward polar residues. Phosphothreonine is present on Thr211. The short motif at 236-241 (KKKKKA) is the Nucleolar localization signal (NLS) element.

The protein belongs to the CUSTOS family.

The protein resides in the nucleus envelope. In terms of biological role, plays a role in the regulation of Wnt signaling pathway during early development. This Homo sapiens (Human) protein is Protein CUSTOS.